We begin with the raw amino-acid sequence, 1048 residues long: uncharacterized protein (1048 aa).

The tract at residues 601-629 (ENQINEEQQTNVENEQQTEQQFENEDKET) is disordered. Over residues 605 to 621 (NEEQQTNVENEQQTEQQ) the composition is skewed to low complexity.

This is an uncharacterized protein from Methanocaldococcus jannaschii (strain ATCC 43067 / DSM 2661 / JAL-1 / JCM 10045 / NBRC 100440) (Methanococcus jannaschii).